The chain runs to 523 residues: Alanine aminotransferase 2 (523 aa).

Residues 1 to 25 are disordered; sequence MQRAAALVRRGCGPRTPSSWGRSQS. The pyridoxal 5'-phosphate site is built by alanine 187, serine 188, tyrosine 216, asparagine 271, and serine 338. Residue lysine 341 is modified to N6-(pyridoxal phosphate)lysine. Residue arginine 350 coordinates pyridoxal 5'-phosphate. Lysine 415, lysine 505, and lysine 512 each carry N6-acetyllysine.

Belongs to the class-I pyridoxal-phosphate-dependent aminotransferase family. Alanine aminotransferase subfamily. As to quaternary structure, homodimer. Pyridoxal 5'-phosphate serves as cofactor. As to expression, expressed at high levels in muscle, adipose tissue, kidney and brain and at lower levels in the liver and breast.

It carries out the reaction L-alanine + 2-oxoglutarate = pyruvate + L-glutamate. The protein operates within amino-acid degradation; L-alanine degradation via transaminase pathway; pyruvate from L-alanine: step 1/1. Catalyzes the reversible transamination between alanine and 2-oxoglutarate to form pyruvate and glutamate. This Homo sapiens (Human) protein is Alanine aminotransferase 2 (GPT2).